We begin with the raw amino-acid sequence, 67 residues long: Large ribosomal subunit protein bL35 (67 aa).

It belongs to the bacterial ribosomal protein bL35 family.

This chain is Large ribosomal subunit protein bL35, found in Gloeothece citriformis (strain PCC 7424) (Cyanothece sp. (strain PCC 7424)).